Consider the following 28-residue polypeptide: 3,4-dihydroxybenzoate decarboxylase (28 aa).

As to quaternary structure, homopentamer.

The catalysed reaction is 3,4-dihydroxybenzoate + H(+) = catechol + CO2. Its activity is regulated as follows. Inhibited by oxygen. Completely inhibited by HgCl(2). Partially inhibited by ZnSO(4), 2,3,4-trihydroxybeonzoate and 3,4,5-trihydroxybeonzoate. Unaffected by KCl, MnCl(2) or EDTA. Not stimulated by thiamine phosphate, pyridoxal 5'-phosphate or biotin. Not inhibited by hydroxylamine, NaBH(4) or avidin. Reversibly catalyzes the decarboxylation of 3,4-dihydroxybenzoate to catechol. Inactive toward 4-hydroxybenzoate and other benzoate derivatives. This Sedimentibacter hydroxybenzoicus (Clostridium hydroxybenzoicum) protein is 3,4-dihydroxybenzoate decarboxylase.